We begin with the raw amino-acid sequence, 403 residues long: Tyrosine--tRNA ligase (403 aa).

Positions 42-51 (PTAPDLHLGH) match the 'HIGH' region motif. The 'KMSKS' region motif lies at 226–230 (KMSKS). Lys-229 provides a ligand contact to ATP. In terms of domain architecture, S4 RNA-binding spans 336 to 396 (MPISAVLNKA…GKKAFGRVTL (61 aa)).

This sequence belongs to the class-I aminoacyl-tRNA synthetase family. TyrS type 2 subfamily. As to quaternary structure, homodimer.

The protein resides in the cytoplasm. It catalyses the reaction tRNA(Tyr) + L-tyrosine + ATP = L-tyrosyl-tRNA(Tyr) + AMP + diphosphate + H(+). In terms of biological role, catalyzes the attachment of tyrosine to tRNA(Tyr) in a two-step reaction: tyrosine is first activated by ATP to form Tyr-AMP and then transferred to the acceptor end of tRNA(Tyr). This chain is Tyrosine--tRNA ligase, found in Pseudomonas syringae pv. syringae (strain B728a).